Here is a 606-residue protein sequence, read N- to C-terminus: MMRTHEAGSLRAGHAGQSVTLAGWVARRRDHGGVIFIDLRDASGVAQVVFREGEMAERAHRLRSEFCLRITGEVVRRPEGNENPEIGTGDIEVTATELEVLSESAPLPFPLDEHLEVGEETRLRHRYLDLRRNGPAKAMRMRSEVNRIARDVLHGRDFVEVETPTMTRSTPEGARDFLIPARLQPGNWYALPQSPQLFKQLLMVGGLERYFQIARCYRDEDFRADRQPEFTQLDIEMSFVDQDDVIELGEEIISALWRETAGHEIPRPIQRMTYADAMARFGTDKPDLRFGLELTEMTEYFADTPFRVFRAPYVGAVVMPGGADQPRRQLDAWQDWAKQRGAKGLAYVLVGQDGTLSGPVAKNLSDGERDGLVKAVGAAPGDCVFFAAGDRSSSRALLGAARLEIGERCGLIDHDAWSFVWVVDAPMFESIDDTDDVAVGSGRWTAVHHPFTSPNADWVDNFESDPANALAWAYDIVCNGNEIGGGSIRIHRSDVQKRVFELLGISEEQAQDKFGFLLEAFKYGPPPHGGIAFGWDRICMLLAGADSLRDVIAFPKSGGGYDPLTGAPSPITVEQRKEAGVDAKPAAKVGDESISVFPPGVVEKQG.

Glu172 lines the L-aspartate pocket. Residues 196–199 (QLFK) form an aspartate region. Arg218 contributes to the L-aspartate binding site. Residues 218 to 220 (RDE) and Gln227 contribute to the ATP site. Position 448 (His448) interacts with L-aspartate. Residue Glu482 coordinates ATP. Arg489 contacts L-aspartate. 534–537 (GWDR) serves as a coordination point for ATP.

The protein belongs to the class-II aminoacyl-tRNA synthetase family. Type 1 subfamily. In terms of assembly, homodimer.

Its subcellular location is the cytoplasm. It catalyses the reaction tRNA(Asx) + L-aspartate + ATP = L-aspartyl-tRNA(Asx) + AMP + diphosphate. Its function is as follows. Aspartyl-tRNA synthetase with relaxed tRNA specificity since it is able to aspartylate not only its cognate tRNA(Asp) but also tRNA(Asn). Reaction proceeds in two steps: L-aspartate is first activated by ATP to form Asp-AMP and then transferred to the acceptor end of tRNA(Asp/Asn). The polypeptide is Aspartate--tRNA(Asp/Asn) ligase (Saccharopolyspora erythraea (strain ATCC 11635 / DSM 40517 / JCM 4748 / NBRC 13426 / NCIMB 8594 / NRRL 2338)).